Here is a 348-residue protein sequence, read N- to C-terminus: Holliday junction branch migration complex subunit RuvB (348 aa).

Positions 1 to 20 (MKPPARMVSPERRSDDVGDT) are disordered. The segment at 1–183 (MKPPARMVSP…FGIPIRLNFY (183 aa)) is large ATPase domain (RuvB-L). ATP-binding positions include leucine 22, arginine 23, glycine 64, lysine 67, threonine 68, threonine 69, 130 to 132 (EDF), arginine 173, tyrosine 183, and arginine 220. Threonine 68 is a Mg(2+) binding site. Positions 184–254 (TVEELEGIVT…IADHALSALE (71 aa)) are small ATPAse domain (RuvB-S). The tract at residues 257–348 (AAGLDAMDRR…FGLFGSEDDA (92 aa)) is head domain (RuvB-H). Positions 293, 312, and 317 each coordinate DNA.

The protein belongs to the RuvB family. As to quaternary structure, homohexamer. Forms an RuvA(8)-RuvB(12)-Holliday junction (HJ) complex. HJ DNA is sandwiched between 2 RuvA tetramers; dsDNA enters through RuvA and exits via RuvB. An RuvB hexamer assembles on each DNA strand where it exits the tetramer. Each RuvB hexamer is contacted by two RuvA subunits (via domain III) on 2 adjacent RuvB subunits; this complex drives branch migration. In the full resolvosome a probable DNA-RuvA(4)-RuvB(12)-RuvC(2) complex forms which resolves the HJ.

Its subcellular location is the cytoplasm. The catalysed reaction is ATP + H2O = ADP + phosphate + H(+). Functionally, the RuvA-RuvB-RuvC complex processes Holliday junction (HJ) DNA during genetic recombination and DNA repair, while the RuvA-RuvB complex plays an important role in the rescue of blocked DNA replication forks via replication fork reversal (RFR). RuvA specifically binds to HJ cruciform DNA, conferring on it an open structure. The RuvB hexamer acts as an ATP-dependent pump, pulling dsDNA into and through the RuvAB complex. RuvB forms 2 homohexamers on either side of HJ DNA bound by 1 or 2 RuvA tetramers; 4 subunits per hexamer contact DNA at a time. Coordinated motions by a converter formed by DNA-disengaged RuvB subunits stimulates ATP hydrolysis and nucleotide exchange. Immobilization of the converter enables RuvB to convert the ATP-contained energy into a lever motion, pulling 2 nucleotides of DNA out of the RuvA tetramer per ATP hydrolyzed, thus driving DNA branch migration. The RuvB motors rotate together with the DNA substrate, which together with the progressing nucleotide cycle form the mechanistic basis for DNA recombination by continuous HJ branch migration. Branch migration allows RuvC to scan DNA until it finds its consensus sequence, where it cleaves and resolves cruciform DNA. This chain is Holliday junction branch migration complex subunit RuvB, found in Bradyrhizobium sp. (strain BTAi1 / ATCC BAA-1182).